The chain runs to 980 residues: Ankycorbin (980 aa).

At methionine 1 the chain carries N-acetylmethionine. Serine 11 bears the Phosphoserine mark. ANK repeat units lie at residues 18–51, 52–81, 85–114, 118–147, 151–180, 184–213, and 217–247; these read KNDD…KHDS, EGKT…DVTA, TGHS…PAES, SGKT…PINL, DGNI…DVNS, SGRT…DLNL, and LGYN…DADL. Basic and acidic residues predominate over residues 247 to 259; sequence LKTPTKPKQHDQV. Residues 247–301 are disordered; it reads LKTPTKPKQHDQVSKISSERSGTPKKRKAPPPPISPTQLSDVSSPRSITSTPLSG. Phosphothreonine is present on threonine 249. The Nuclear localization signal signature appears at 270-276; the sequence is PKKRKAP. A phosphoserine mark is found at serine 281, serine 286, and serine 293. A compositionally biased stretch (polar residues) spans 282–299; that stretch reads PTQLSDVSSPRSITSTPL. Phosphothreonine occurs at positions 295 and 297. 14 positions are modified to phosphoserine: serine 300, serine 304, serine 318, serine 327, serine 329, serine 340, serine 341, serine 350, serine 358, serine 419, serine 512, serine 515, serine 667, and serine 915. The stretch at 349 to 374 forms a coiled coil; it reads LSLLQAKVASLTLHNKELQDKLQAKS. Residues 387-423 form a disordered region; sequence YHSTQTDLGPSLGKPGETSPPDSKSSPSVLIHSLGKS. Positions 425 to 947 form a coiled coil; sequence TDNDVRIQQL…QHQEVISVYR (523 aa).

As to quaternary structure, interacts with PALLD. Associates with actin. However, does not bind F-actin directly. Highly expressed in placenta, muscle, kidney and testis. Moderately expressed in heart, brain, lung, liver and intestine. Isoform 2 is widely expressed and expressed in fetal and adult testes, and spermatozoa.

It is found in the cytoplasm. The protein resides in the cytoskeleton. It localises to the stress fiber. Its subcellular location is the cell cortex. The protein localises to the cell junction. It is found in the nucleus. Functionally, plays a role in actin regulation at the ectoplasmic specialization, a type of cell junction specific to testis. Important for establishment of sperm polarity and normal spermatid adhesion. May also promote integrity of Sertoli cell tight junctions at the blood-testis barrier. This chain is Ankycorbin (RAI14), found in Homo sapiens (Human).